The following is a 369-amino-acid chain: Xylene/toluene monooxygenase hydroxylase component XylM (369 aa).

3 consecutive transmembrane segments (helical) span residues 8-28 (LIPVVTACGLIGFYYGGYWVW), 60-80 (LTQYLQLPLMIGLYGLLVFGV), and 91-111 (LQVAGCILSLAWLSGVPTLPV). Residues His-113, His-117, His-143, His-147, and His-148 each contribute to the Fe cation site. A helical membrane pass occupies residues 207-227 (VALLLALPGLVSYLGGPALGL). The Fe cation site is built by His-282, His-285, and His-286. A helical transmembrane segment spans residues 305-325 (MPSLFVCFLLGLIPPLWFALI).

It belongs to the fatty acid desaturase type 1 family. AlkB subfamily. The xylene/toluene monooxygenase is composed of two subunits: the electron transfer component XylA and the hydroxylase component XylM. The cofactor is Fe(2+).

It localises to the cell inner membrane. The catalysed reaction is m-xylene + 2 reduced [2Fe-2S]-[ferredoxin] + O2 + 2 H(+) = 3-methylbenzyl alcohol + 2 oxidized [2Fe-2S]-[ferredoxin] + H2O. The enzyme catalyses p-xylene + 2 reduced [2Fe-2S]-[ferredoxin] + O2 + 2 H(+) = 4-methylbenzyl alcohol + 2 oxidized [2Fe-2S]-[ferredoxin] + H2O. It catalyses the reaction toluene + 2 reduced [2Fe-2S]-[ferredoxin] + O2 + 2 H(+) = benzyl alcohol + 2 oxidized [2Fe-2S]-[ferredoxin] + H2O. Its function is as follows. Component of a monooxygenase that catalyzes the first step in the degradation of xylenes and toluenes. XylM catalyzes the hydroxylation of the methyl side chain of xylenes and toluenes. The electrons are provided by the electron transfer component XylA. The best substrates are m-xylene and p-xylene, followed by toluene. Shows weak activity with o-xylene. In vitro, is also active with substituted compounds, such as chlorotoluenes. Cannot use benzyl alcohol. The polypeptide is Xylene/toluene monooxygenase hydroxylase component XylM (Pseudomonas putida (Arthrobacter siderocapsulatus)).